The chain runs to 534 residues: ATP-dependent rRNA helicase RRP3 (534 aa).

The tract at residues 67–107 is disordered; the sequence is KQQALQKQQKQQKQQEQENANHNQTESSLSSSSSTTSSSIT. 2 stretches are compositionally biased toward low complexity: residues 68–80 and 91–107; these read QQAL…QQKQ and TESS…SSIT. The short motif at 118 to 146 is the Q motif element; that stretch reads KTFKELNLVPDLLESIESMKFTKPTPIQS. In terms of domain architecture, Helicase ATP-binding spans 149–320; the sequence is IPHALEGKDI…RASLHNPVRV (172 aa). 162-169 lines the ATP pocket; it reads AQTGSGKT. The DEAD box signature appears at 268–271; sequence DEAD. One can recognise a Helicase C-terminal domain in the interval 347–492; the sequence is ILIHLLNEFM…EDKPPKEVLD (146 aa). Basic and acidic residues-rich tracts occupy residues 505–517 and 525–534; these read AIRQ…DKRN and NRDDADREER. The segment at 505 to 534 is disordered; the sequence is AIRQTKEIHDKRNGGGGRRRNRDDADREER.

This sequence belongs to the DEAD box helicase family. DDX47/RRP3 subfamily. In terms of assembly, interacts with the SSU processome.

Its subcellular location is the nucleus. It carries out the reaction ATP + H2O = ADP + phosphate + H(+). Functionally, ATP-dependent rRNA helicase required for pre-ribosomal RNA processing. Involved in the maturation of the 35S-pre-rRNA and to its cleavage to mature 18S rRNA. This chain is ATP-dependent rRNA helicase RRP3, found in Candida albicans (strain SC5314 / ATCC MYA-2876) (Yeast).